A 137-amino-acid polypeptide reads, in one-letter code: ATP synthase epsilon chain (137 aa).

It belongs to the ATPase epsilon chain family. In terms of assembly, F-type ATPases have 2 components, CF(1) - the catalytic core - and CF(0) - the membrane proton channel. CF(1) has five subunits: alpha(3), beta(3), gamma(1), delta(1), epsilon(1). CF(0) has three main subunits: a, b and c.

The protein localises to the cell membrane. Produces ATP from ADP in the presence of a proton gradient across the membrane. In Thermobifida fusca (strain YX), this protein is ATP synthase epsilon chain.